The chain runs to 160 residues: Serine-protein kinase RsbW (160 aa).

The protein belongs to the anti-sigma-factor family.

It carries out the reaction L-seryl-[protein] + ATP = O-phospho-L-seryl-[protein] + ADP + H(+). The enzyme catalyses L-threonyl-[protein] + ATP = O-phospho-L-threonyl-[protein] + ADP + H(+). Its function is as follows. Negative regulator of sigma-B activity. Phosphorylates and inactivates its specific antagonist protein, RsbV. Upon phosphorylation of RsbV, RsbW is released and binds to sigma-B, thereby blocking its ability to form an RNA polymerase holoenzyme (E-sigma-B). The protein is Serine-protein kinase RsbW of Bacillus cereus (strain B4264).